The primary structure comprises 235 residues: Large ribosomal subunit protein uL1 (235 aa).

Belongs to the universal ribosomal protein uL1 family. In terms of assembly, part of the 50S ribosomal subunit.

In terms of biological role, binds directly to 23S rRNA. The L1 stalk is quite mobile in the ribosome, and is involved in E site tRNA release. Its function is as follows. Protein L1 is also a translational repressor protein, it controls the translation of the L11 operon by binding to its mRNA. In Synechococcus sp. (strain CC9605), this protein is Large ribosomal subunit protein uL1.